The chain runs to 108 residues: UPF0060 membrane protein Rsph17029_0436 (108 aa).

The next 4 helical transmembrane spans lie at 5 to 25 (LAAYAGAALAEIAGCFAVWAW), 32 to 52 (ALWLVPGALSLGAFAWLLALT), 62 to 82 (AVYGGVYVAASLLWLWAVEGV), and 86 to 106 (RWDMGGAALVLAGAAVILWAP).

This sequence belongs to the UPF0060 family.

Its subcellular location is the cell inner membrane. The chain is UPF0060 membrane protein Rsph17029_0436 from Cereibacter sphaeroides (strain ATCC 17029 / ATH 2.4.9) (Rhodobacter sphaeroides).